The sequence spans 655 residues: Putative sensor protein Sfri_3689 (655 aa).

The N-terminal stretch at methionine 1–alanine 17 is a signal peptide. Residues phenylalanine 252–isoleucine 272 traverse the membrane as a helical segment. A Histidine kinase domain is found at glycine 419–glutamine 653. Position 422 is a phosphohistidine; by autocatalysis (histidine 422).

Its subcellular location is the cell membrane. It carries out the reaction ATP + protein L-histidine = ADP + protein N-phospho-L-histidine.. The protein is Putative sensor protein Sfri_3689 of Shewanella frigidimarina (strain NCIMB 400).